The sequence spans 742 residues: Transcription factor FFUJ_09177 (742 aa).

Residues 15 to 41 constitute a DNA-binding region (zn(2)-C6 fungal-type); it reads CVSCARSKQRCDGHSPCGRCSLKNLDC. Disordered stretches follow at residues 50–80 and 218–244; these read GQNSTRGASPQSPSASRESYSQNTLPVVQSQ and HSLDISSYQGQSNQTSPETTSHSSVRD. The span at 218–240 shows a compositional bias: polar residues; it reads HSLDISSYQGQSNQTSPETTSHS.

It is found in the nucleus. Functionally, transcription factor; part of the DMATS1 gene cluster that mediates the biosynthesis of a reversely N-prenylated monomeric L-tryptophan (r-N-DMAT). Seems not to regulate the expression of the DMATS1 cluster. The sequence is that of Transcription factor FFUJ_09177 from Gibberella fujikuroi (strain CBS 195.34 / IMI 58289 / NRRL A-6831) (Bakanae and foot rot disease fungus).